We begin with the raw amino-acid sequence, 420 residues long: RNA-directed RNA polymerase (420 aa).

In terms of domain architecture, RdRp catalytic spans 199-325; sequence GTICETDISG…IWFKGLEEYL (127 aa).

This sequence belongs to the ssRNA positive-strand viruses RNA-directed RNA polymerase family. In terms of processing, might be cleaved to release the mature protein(s).

It catalyses the reaction RNA(n) + a ribonucleoside 5'-triphosphate = RNA(n+1) + diphosphate. Its function is as follows. RNA-dependent RNA polymerase which replicates the viral genome. This is RNA-directed RNA polymerase from Mushroom bacilliform virus (isolate Australia/AUS LF-1) (MBV).